The primary structure comprises 111 residues: Type III endosome membrane protein TEMP (111 aa).

At 1-27 (MIGGNTTIISGAINASTEAPGLGTGGR) the chain is on the extracellular side. A glycan (N-linked (GlcNAc...) asparagine) is linked at Asn-5. A helical; Signal-anchor for type III membrane protein transmembrane segment spans residues 28 to 48 (AWPVLVGVVLGAVVLSILIAL). Topologically, residues 49–111 (AAKCHLCRRY…TTGSRDHFSL (63 aa)) are cytoplasmic. The tract at residues 64–111 (HRPLSSAGGGNRPPVGEDEDDDGFIEDNYIQPGAGEMETTGSRDHFSL) is disordered. A compositionally biased stretch (acidic residues) spans 79-88 (GEDEDDDGFI).

Expressed in stomach, kidney, large and small intestine and kidney.

It is found in the membrane. The protein localises to the early endosome. Its subcellular location is the recycling endosome. The protein resides in the cell membrane. In terms of biological role, may be involved in membrane trafficking between endosomes and plasma membrane. The polypeptide is Type III endosome membrane protein TEMP (Mus musculus (Mouse)).